The chain runs to 1400 residues: Bromodomain-containing protein 4 (1400 aa).

The disordered stretch occupies residues 1 to 58; it reads MSTESGPGTRLRNLPVMGDGLETSQMSTTQAQAQPQPANAASTNPPPPETSNPNKPKR. Residues 23 to 43 are compositionally biased toward low complexity; that stretch reads TSQMSTTQAQAQPQPANAAST. Residues 58 to 164 form the Bromo 1 domain; it reads RQTNQLQYLL…KLFLQKINEL (107 aa). Lys-99 participates in a covalent cross-link: Glycyl lysine isopeptide (Lys-Gly) (interchain with G-Cter in SUMO2). 2 disordered regions span residues 176-353 and 461-616; these read AKGR…KISE and EPEE…YEEK. Positions 197–212 are enriched in low complexity; the sequence is PNTTQASTSPQTQTPQ. The segment covering 244–267 has biased composition (pro residues); the sequence is PPQPLQTPSPVPPQPPPPPAPVPQ. Positions 321–337 are enriched in basic and acidic residues; sequence PRRESSRPVKPPKKDVP. The 110-residue stretch at 349 to 458 folds into the Bromo 2 domain; sequence SKISEQLKCC…DVFEMRFAKM (110 aa). Ser-471 carries the post-translational modification Phosphoserine. The span at 479–498 shows a compositional bias: low complexity; sequence KVVAPPSSSDSSSDSSSDSD. Phosphoserine; by CK2 is present on residues Ser-485, Ser-489, and Ser-493. The tract at residues 485 to 504 is NPS region; sequence SSSDSSSDSSSDSDSSTDDS. Position 495 is a phosphoserine (Ser-495). Phosphoserine; by CK2 occurs at positions 499, 500, and 504. The tract at residues 525–580 is BID region; the sequence is QLAALSQPQQNKPKKKEKDKKEKKKEKHKKKEEVEENKKSKTKELPPKKTKKNNSS. Residues 536-554 show a composition bias toward basic residues; sequence KPKKKEKDKKEKKKEKHKK. Residues 555-571 show a composition bias toward basic and acidic residues; sequence KEEVEENKKSKTKELPP. Lys-586 is covalently cross-linked (Glycyl lysine isopeptide (Lys-Gly) (interchain with G-Cter in SUMO2)). The region spanning 601–683 is the NET domain; sequence ESEEEDKCKP…SCLRKKRKPQ (83 aa). Position 602 is a phosphoserine (Ser-602). A compositionally biased stretch (basic and acidic residues) spans 606 to 616; it reads DKCKPMSYEEK. Glycyl lysine isopeptide (Lys-Gly) (interchain with G-Cter in SUMO2) cross-links involve residues Lys-646 and Lys-695. The interval 675–1125 is disordered; the sequence is CLRKKRKPQA…GCPPASPAAV (451 aa). Positions 700–713 are enriched in low complexity; sequence SSSESESTSESSSS. Residues 725–745 are compositionally biased toward basic residues; it reads KSKKKGHTGRDQKKHHHHHHP. 4 stretches are compositionally biased toward pro residues: residues 748–787, 835–848, 883–892, and 900–909; these read QPAP…PPSM, PELP…PEHS, PPKPTRPPAV, and PLLPQPPMAQ. A compositionally biased stretch (low complexity) spans 928-938; sequence MQMQLYLQQLQ. Composition is skewed to pro residues over residues 955 to 966, 975 to 1000, and 1013 to 1037; these read QPPPPLPPPPHP, PQPP…PRPV, and QPPP…PQPA. Residues 1050 to 1400 are C-terminal (CTD) region; sequence RHHKSDPYSA…LLSIFEENLF (351 aa). Lys-1053 participates in a covalent cross-link: Glycyl lysine isopeptide (Lys-Gly) (interchain with G-Cter in SUMO2). Polar residues predominate over residues 1075 to 1084; sequence QMPQFQSLTH. A compositionally biased stretch (low complexity) spans 1085-1095; it reads QSPPQQNVQPK. Residue Lys-1147 is modified to N6-acetyllysine; alternate. A Glycyl lysine isopeptide (Lys-Gly) (interchain with G-Cter in SUMO1); alternate cross-link involves residue Lys-1147. Residue Lys-1147 forms a Glycyl lysine isopeptide (Lys-Gly) (interchain with G-Cter in SUMO2); alternate linkage. 2 positions are modified to phosphoserine: Ser-1153 and Ser-1162. The disordered stretch occupies residues 1155 to 1377; sequence IIRSEPFSTS…KREQERRRRE (223 aa). Basic and acidic residues predominate over residues 1211–1232; that stretch reads PDKDKQKQEPKTPVAPKKDLKI. Lys-1233 is covalently cross-linked (Glycyl lysine isopeptide (Lys-Gly) (interchain with G-Cter in SUMO2)). Ser-1237 and Ser-1240 each carry phosphoserine. The segment covering 1247-1258 has biased composition (low complexity); that stretch reads TTPSSTAKSSSD. The span at 1259–1320 shows a compositional bias: basic and acidic residues; the sequence is SFEHFRRAAR…AHEEARRRQE (62 aa). Over residues 1321–1357 the composition is skewed to low complexity; that stretch reads QQQQQQQQRQEQQQQQQQAAAVAAASAPQAQSSQPQS. The span at 1361 to 1377 shows a compositional bias: basic and acidic residues; that stretch reads QQRELARKREQERRRRE.

The protein belongs to the BET family. Binds acetylated histone H4. Interacts with p53/TP53; the interaction is direct. Interacts (via CTD region) with CDK9 and CCNT1, acting as an associated component of P-TEFb complex. Interacts with RELA (when acetylated at 'Lys-310'). Interacts (via NET domain) with NSD3, CHD4, BICRA and ATAD5. The interaction with BICRA bridges BRD4 to the GBAF complex. Interacts (via NET domain) with JMJD6 (via JmjC and N-terminal domains); the interaction is stronger in presence of ssRNA and recruits JMJD6 on distal enhancers. Interacts with NSD3. Interacts with NIPBL. Post-translationally, phosphorylation by CK2 disrupt the intramolecular binding between the bromo domain 2 and the NPS region and promotes binding between the NPS and the BID regions, leading to activate the protein and promote binding to acetylated histones. In absence of phosphorylation, BRD4 does not localize to p53/TP53 target gene promoters, phosphorylation promoting recruitment to p53/TP53 target promoters.

Its subcellular location is the nucleus. It localises to the chromosome. Functionally, chromatin reader protein that recognizes and binds acetylated histones and plays a key role in transmission of epigenetic memory across cell divisions and transcription regulation. Remains associated with acetylated chromatin throughout the entire cell cycle and provides epigenetic memory for postmitotic G1 gene transcription by preserving acetylated chromatin status and maintaining high-order chromatin structure. During interphase, plays a key role in regulating the transcription of signal-inducible genes by associating with the P-TEFb complex and recruiting it to promoters. Also recruits P-TEFb complex to distal enhancers, so called anti-pause enhancers in collaboration with JMJD6. BRD4 and JMJD6 are required to form the transcriptionally active P-TEFb complex by displacing negative regulators such as HEXIM1 and 7SKsnRNA complex from P-TEFb, thereby transforming it into an active form that can then phosphorylate the C-terminal domain (CTD) of RNA polymerase II. Regulates differentiation of naive CD4(+) T-cells into T-helper Th17 by promoting recruitment of P-TEFb to promoters. Promotes phosphorylation of 'Ser-2' of the C-terminal domain (CTD) of RNA polymerase II. According to a report, directly acts as an atypical protein kinase and mediates phosphorylation of 'Ser-2' of the C-terminal domain (CTD) of RNA polymerase II; these data however need additional evidences in vivo. In addition to acetylated histones, also recognizes and binds acetylated RELA, leading to further recruitment of the P-TEFb complex and subsequent activation of NF-kappa-B. Also acts as a regulator of p53/TP53-mediated transcription: following phosphorylation by CK2, recruited to p53/TP53 specific target promoters. The sequence is that of Bromodomain-containing protein 4 (Brd4) from Mus musculus (Mouse).